The primary structure comprises 622 residues: uncharacterized protein (622 aa).

The N-terminal stretch at 1 to 20 is a signal peptide; that stretch reads MKIKAVAIFLSLLMIISLFS.

This is an uncharacterized protein from Methanocaldococcus jannaschii (strain ATCC 43067 / DSM 2661 / JAL-1 / JCM 10045 / NBRC 100440) (Methanococcus jannaschii).